The sequence spans 704 residues: Seven transmembrane domain-containing serine/threonine-protein kinase 2 (704 aa).

At 1-5 (MPSKE) the chain is on the extracellular side. A helical transmembrane segment spans residues 6 to 26 (FIIPLILLCFYSVNGFVAVIS). The Cytoplasmic segment spans residues 27-42 (SLVELFIHKASWNSIK). The chain crosses the membrane as a helical span at residues 43–63 (IFFYSLLILQCLCRCIIIGWG). Residues 64–76 (MIETVQGGEFYSN) lie on the Extracellular side of the membrane. The helical transmembrane segment at 77–97 (FPSLLFISYAGLVALQMIQFL) threads the bilayer. The Cytoplasmic segment spans residues 98 to 121 (PNDNQYLLLSEGKKNNHKVKVGTN). The helical transmembrane segment at 122-142 (ILIFFNLFMYFGMFLLFGIAE) threads the bilayer. At 143-185 (KQVGNSTSFNHHGNHNSTTSTSTDEIPLVSTEVGELYLFGDKD) the chain is on the extracellular side. Asn147 and Asn158 each carry an N-linked (GlcNAc...) asparagine glycan. A helical membrane pass occupies residues 186 to 206 (PIYIVLDCFYFVCLLLLLIFH). At 207-224 (SYVGWKTYKRNKDLFGIK) the chain is on the cytoplasmic side. The helical transmembrane segment at 225 to 245 (LNVIHLILLICIFIRSLLVII) threads the bilayer. The Extracellular portion of the chain corresponds to 246–265 (DPSSPNNSILHIDTESWLIY). Residue Asn251 is glycosylated (N-linked (GlcNAc...) asparagine). A helical membrane pass occupies residues 266-286 (IYTISYYVVGEIIPGMLLIVI). At 287-704 (EFLLPYHKRK…WSIEKDSSSK (418 aa)) the chain is on the cytoplasmic side. The Protein kinase domain maps to 317 to 682 (IAIHELLGMG…SLGVKFHLAN (366 aa)). ATP-binding positions include 323-331 (LGMGGSGAM) and Lys350. Catalysis depends on Asp506, which acts as the Proton acceptor.

It belongs to the protein kinase superfamily. Ser/Thr protein kinase family.

The protein resides in the membrane. It carries out the reaction L-seryl-[protein] + ATP = O-phospho-L-seryl-[protein] + ADP + H(+). The enzyme catalyses L-threonyl-[protein] + ATP = O-phospho-L-threonyl-[protein] + ADP + H(+). In Dictyostelium discoideum (Social amoeba), this protein is Seven transmembrane domain-containing serine/threonine-protein kinase 2 (7tmk2).